Consider the following 239-residue polypeptide: Ribosomal RNA small subunit methyltransferase G (239 aa).

S-adenosyl-L-methionine-binding positions include Gly79, Phe84, 130 to 131 (AE), and Arg149.

The protein belongs to the methyltransferase superfamily. RNA methyltransferase RsmG family.

The protein localises to the cytoplasm. In terms of biological role, specifically methylates the N7 position of a guanine in 16S rRNA. This Lactobacillus johnsonii (strain CNCM I-12250 / La1 / NCC 533) protein is Ribosomal RNA small subunit methyltransferase G.